We begin with the raw amino-acid sequence, 298 residues long: Zinc import ATP-binding protein ZnuC (298 aa).

Residues 17-232 (IELRNAGVYR…PEYVRLFGSR (216 aa)) enclose the ABC transporter domain. 49 to 56 (GPNGAGKS) contributes to the ATP binding site. The tract at residues 273–298 (RGHCHVEDGHHHDHEHHHHEGGQPRA) is disordered. Positions 276-298 (CHVEDGHHHDHEHHHHEGGQPRA) are enriched in basic and acidic residues.

This sequence belongs to the ABC transporter superfamily. Zinc importer (TC 3.A.1.15.5) family. The complex is composed of two ATP-binding proteins (ZnuC), two transmembrane proteins (ZnuB) and a solute-binding protein (ZnuA).

The protein resides in the cell inner membrane. The catalysed reaction is Zn(2+)(out) + ATP(in) + H2O(in) = Zn(2+)(in) + ADP(in) + phosphate(in) + H(+)(in). Functionally, part of the ABC transporter complex ZnuABC involved in zinc import. Responsible for energy coupling to the transport system. This is Zinc import ATP-binding protein ZnuC from Brucella suis biovar 1 (strain 1330).